Consider the following 192-residue polypeptide: Probable cobalt-precorrin-6B C(15)-methyltransferase (decarboxylating) (192 aa).

S-adenosyl-L-methionine is bound by residues T20, 44 to 48 (GSGTG), E68, and A96.

This sequence belongs to the methyltransferase superfamily. Archaeal-type CbiT family.

The catalysed reaction is Co-precorrin-6B + S-adenosyl-L-methionine = Co-precorrin-7 + S-adenosyl-L-homocysteine + CO2. The protein operates within cofactor biosynthesis; adenosylcobalamin biosynthesis; cob(II)yrinate a,c-diamide from sirohydrochlorin (anaerobic route): step 8/10. Functionally, catalyzes the methylation of C-15 in cobalt-precorrin-6B followed by the decarboxylation of C-12 to form cobalt-precorrin-7. This chain is Probable cobalt-precorrin-6B C(15)-methyltransferase (decarboxylating), found in Sulfurisphaera tokodaii (strain DSM 16993 / JCM 10545 / NBRC 100140 / 7) (Sulfolobus tokodaii).